A 927-amino-acid polypeptide reads, in one-letter code: MEVNGVSQSEAAPYVTKSSVKFRDNFWGSEDAGMDALMSRTKSSLSVLESIDEFYAKRASIEREYASKLQELAASSADIPEVGSTLNNILSMRTETGSMAKAHEEVSQQINTELRNKIREYIDQTEQQKVVAANAIEELYQKKTALEIDLSEKKDAYEYSCNKLNSYMRQTKKMTGRELDKYNLKIRQAALAVKKMDAEYRETNELLLTVTREWIDRWTEVCDAFQHIEEYRLEFLKTNMWAYANIISTACVKDDESCEKIRLTLENTNIDEDITQMIQNEGTGTTIPPLPEFNDYFKENGLNYDIDQLISKAPSYPYSSSRPSASASLASSPTRSAFRPKTSETVSSEVVSSPPTSPLHSPVKPVSNEQVEQVTEVELSIPVPSIQEAESQKPVLTGSSMRRPSVTSPTFEVAARPLTSMDVRSSHNAETEVQAIPAATDISPEVKEGKNSENAITKDNDDIILSSQLQPTATGSRSSRLSFSRHGHGSQTSLGSIKRKSIMERMGRPTSPFMGSSFSNMGSRSTSPTKEGFASNQHATGASVQSDELEDIDPRANVVLNVGPNMLSVGEAPVESTSKEEDKDVPDPIANAMAELSSSMRRRQSTSVDDEAPVSLSKTSSSTRLNGLGYHSRNTSIASDIDGVPKKSTLGAPPAAHTSAQMQRMSNSFASQTKQVFGEQRTENSARESLRHSRSNMSRSPSPMLSRRSSTLRPSFERSASSLSVRQSDVVSPAPSTRARGQSVSGQQRPSSSMSLYGEYNKSQPQLSMQRSVSPNPLGPNRRSSSVLQSQKSTSSNTSNRNNGGYSGSRPSSEMGHRYGSMSGRSMRQVSQRSTSRARSPEPTNRNSVQSKNVDPRATFTAEGEPILGYVIALYDYQAQIPEEISFQKGDTLMVLRTQEDGWWDGEIINVPNSKRGLFPSNFVQTV.

The F-BAR domain maps to 20–273 (VKFRDNFWGS…TLENTNIDED (254 aa)). A coiled-coil region spans residues 108–207 (QQINTELRNK…AEYRETNELL (100 aa)). The segment covering 321–354 (SRPSASASLASSPTRSAFRPKTSETVSSEVVSSP) has biased composition (low complexity). 5 disordered regions span residues 321–370 (SRPS…SNEQ), 390–409 (ESQK…VTSP), 423–495 (VRSS…TSLG), 509–550 (PTSP…DELE), and 597–857 (SSSM…VDPR). A phosphoserine mark is found at S331 and S332. The span at 397-409 (TGSSMRRPSVTSP) shows a compositional bias: polar residues. The span at 444-461 (PEVKEGKNSENAITKDND) shows a compositional bias: basic and acidic residues. Polar residues-rich tracts occupy residues 465–482 (LSSQ…SRLS), 513–546 (FMGS…SVQS), and 616–625 (LSKTSSSTRL). Residue T529 is modified to Phosphothreonine. 2 positions are modified to phosphoserine: S636 and S639. Over residues 658 to 675 (TSAQMQRMSNSFASQTKQ) the composition is skewed to polar residues. Residues 680 to 691 (QRTENSARESLR) show a composition bias toward basic and acidic residues. A compositionally biased stretch (low complexity) spans 695–714 (SNMSRSPSPMLSRRSSTLRP). At S700 the chain carries Phosphoserine. Composition is skewed to polar residues over residues 718 to 730 (RSAS…QSDV) and 739 to 775 (ARGQ…SVSP). S774 is modified (phosphoserine). Low complexity predominate over residues 784 to 813 (SSSVLQSQKSTSSNTSNRNNGGYSGSRPSS). Polar residues predominate over residues 823 to 853 (SGRSMRQVSQRSTSRARSPEPTNRNSVQSKN). An SH3 domain is found at 866–927 (PILGYVIALY…LFPSNFVQTV (62 aa)).

Its subcellular location is the cytoplasm. It localises to the cytoskeleton. After the onset of mitosis, forms a ring-like structure which colocalizes with the medial actin ring. Appears to mediate cytoskeletal rearrangements required for cytokinesis. Essential for viability. This Schizosaccharomyces pombe (strain 972 / ATCC 24843) (Fission yeast) protein is Cell division control protein 15 (cdc15).